A 489-amino-acid chain; its full sequence is Putative general negative regulator of transcription C16C9.04c (489 aa).

The RING-type zinc-finger motif lies at 18–61 (CPLCMEEIDISDKNFKPCQCGYRVCRFCWHHIKEDLNGRCPACR). A coiled-coil region spans residues 76–109 (AEEWKMDLHRKNERKKREKERKEVELSNRKHLAN). The RRM domain maps to 116 to 198 (NLAYVNGLSP…VSDGRHLRAS (83 aa)). The C3H1-type zinc-finger motif lies at 199 to 226 (YGTTKYCTSYLRNQQCPNPSCMYLHEPG). Composition is skewed to polar residues over residues 246 to 261 (LSTK…HSPS) and 466 to 479 (ENQP…NNGN). 2 disordered regions span residues 246–268 (LSTK…PFKT) and 458–489 (VPEQ…GFQS).

Its subcellular location is the nucleus. In terms of biological role, may negatively regulate the basal and activated transcription of many genes. In Schizosaccharomyces pombe (strain 972 / ATCC 24843) (Fission yeast), this protein is Putative general negative regulator of transcription C16C9.04c.